A 189-amino-acid polypeptide reads, in one-letter code: dTTP/UTP pyrophosphatase (189 aa).

D64 (proton acceptor) is an active-site residue.

This sequence belongs to the Maf family. YhdE subfamily. Requires a divalent metal cation as cofactor.

The protein resides in the cytoplasm. It carries out the reaction dTTP + H2O = dTMP + diphosphate + H(+). The enzyme catalyses UTP + H2O = UMP + diphosphate + H(+). In terms of biological role, nucleoside triphosphate pyrophosphatase that hydrolyzes dTTP and UTP. May have a dual role in cell division arrest and in preventing the incorporation of modified nucleotides into cellular nucleic acids. The protein is dTTP/UTP pyrophosphatase of Syntrophomonas wolfei subsp. wolfei (strain DSM 2245B / Goettingen).